The sequence spans 189 residues: Interferon alpha-6 (189 aa).

Residues 1–20 form the signal peptide; it reads MALPFALLMALVVLSCKSSC. Intrachain disulfides connect C24–C122 and C52–C162.

It belongs to the alpha/beta interferon family.

The protein resides in the secreted. Functionally, produced by macrophages, IFN-alpha have antiviral activities. Interferon stimulates the production of two enzymes: a protein kinase and an oligoadenylate synthetase. The chain is Interferon alpha-6 (IFNA6) from Homo sapiens (Human).